The chain runs to 176 residues: MTTLYQTESKQTLTDPATIKDFLKSHGIWFEQWETPAQLTQEASQADILAAYADVLDPFMAANGYQSADVVNIHSGIENYQAIREKFLAEHTHSEDEVRFFVAGQGLFWFNLDGTAVFNVCCEAGDLISVPQGTKHWFDAGPVPNVKAIRIFSDTAGWTPHYTGSQVEQQYRAITL.

Residues histidine 91, histidine 93, glutamate 97, and histidine 136 each contribute to the Fe(2+) site. Ni(2+)-binding residues include histidine 91, histidine 93, glutamate 97, and histidine 136.

It belongs to the acireductone dioxygenase (ARD) family. In terms of assembly, monomer. Requires Fe(2+) as cofactor. Ni(2+) serves as cofactor.

It carries out the reaction 1,2-dihydroxy-5-(methylsulfanyl)pent-1-en-3-one + O2 = 3-(methylsulfanyl)propanoate + CO + formate + 2 H(+). The enzyme catalyses 1,2-dihydroxy-5-(methylsulfanyl)pent-1-en-3-one + O2 = 4-methylsulfanyl-2-oxobutanoate + formate + 2 H(+). It participates in amino-acid biosynthesis; L-methionine biosynthesis via salvage pathway; L-methionine from S-methyl-5-thio-alpha-D-ribose 1-phosphate: step 5/6. Catalyzes 2 different reactions between oxygen and the acireductone 1,2-dihydroxy-3-keto-5-methylthiopentene (DHK-MTPene) depending upon the metal bound in the active site. Fe-containing acireductone dioxygenase (Fe-ARD) produces formate and 2-keto-4-methylthiobutyrate (KMTB), the alpha-ketoacid precursor of methionine in the methionine recycle pathway. Ni-containing acireductone dioxygenase (Ni-ARD) produces methylthiopropionate, carbon monoxide and formate, and does not lie on the methionine recycle pathway. The polypeptide is Acireductone dioxygenase (Picosynechococcus sp. (strain ATCC 27264 / PCC 7002 / PR-6) (Agmenellum quadruplicatum)).